A 362-amino-acid polypeptide reads, in one-letter code: Probable secreted beta-glucosidase UTH1 (362 aa).

The signal sequence occupies residues 1–17 (MKLSALLALSASTAVLA).

The protein belongs to the SUN family.

The protein localises to the mitochondrion outer membrane. The protein resides in the secreted. It localises to the cell wall. Involved in aging, oxidative stress response, and in the regulation of mitochondrial biogenesis. Inactivation of UTH1 increases life span, leads to higher resistance to heat stress and to hydrogen peroxide, and increases sensitivity to the superoxide radical-generating drug paraquat and to copper. Also required for the selective autophagic degradation of mitochondria (mitophagy) in response to nitrogen starvation. May play a role in cell wall morphogenesis and septation. Involved in the remodeling of the cell wall during the various phases of yeast culture development and under various environmental conditions and plays a role in septation. Involved in cell sensitivity to boric acid. The sequence is that of Probable secreted beta-glucosidase UTH1 (UTH1) from Saccharomyces cerevisiae (strain YJM789) (Baker's yeast).